The chain runs to 640 residues: Threonine--tRNA ligase (640 aa).

A TGS domain is found at 1 to 61 (MVKITYPDNS…MQDSTIKLIT (61 aa)). A catalytic region spans residues 242–533 (DHRKLGPKLN…LIENFAGEFP (292 aa)). Cys334, His385, and His510 together coordinate Zn(2+).

It belongs to the class-II aminoacyl-tRNA synthetase family. Homodimer. Zn(2+) is required as a cofactor.

Its subcellular location is the cytoplasm. It carries out the reaction tRNA(Thr) + L-threonine + ATP = L-threonyl-tRNA(Thr) + AMP + diphosphate + H(+). Catalyzes the attachment of threonine to tRNA(Thr) in a two-step reaction: L-threonine is first activated by ATP to form Thr-AMP and then transferred to the acceptor end of tRNA(Thr). Also edits incorrectly charged L-seryl-tRNA(Thr). This is Threonine--tRNA ligase from Petrotoga mobilis (strain DSM 10674 / SJ95).